A 122-amino-acid chain; its full sequence is Large ribosomal subunit protein uL14 (122 aa).

It belongs to the universal ribosomal protein uL14 family. In terms of assembly, part of the 50S ribosomal subunit. Forms a cluster with proteins L3 and L19. In the 70S ribosome, L14 and L19 interact and together make contacts with the 16S rRNA in bridges B5 and B8.

Its function is as follows. Binds to 23S rRNA. Forms part of two intersubunit bridges in the 70S ribosome. The polypeptide is Large ribosomal subunit protein uL14 (Parafrankia sp. (strain EAN1pec)).